The sequence spans 589 residues: CTP synthase (589 aa).

The segment at 1 to 281 (MPQSRTHSRT…DAYVVRQLGL (281 aa)) is amidoligase domain. Ser23 lines the CTP pocket. Ser23 is a binding site for UTP. Residues 24-29 (SLGKGL) and Asp81 each bind ATP. The Mg(2+) site is built by Asp81 and Glu155. CTP is bound by residues 162–164 (DIE), 202–207 (KTKPTQ), and Lys238. UTP-binding positions include 202–207 (KTKPTQ) and Lys238. A Glutamine amidotransferase type-1 domain is found at 306-554 (RIALVGKYVD…VDAALRHKLE (249 aa)). Gly369 contributes to the L-glutamine binding site. The active-site Nucleophile; for glutamine hydrolysis is the Cys396. L-glutamine is bound by residues 397 to 400 (LGLQ), Glu419, and Arg480. Residues His527 and Glu529 contribute to the active site. The interval 562–589 (HGEERAAADDEIAESADRDEVASVDSAG) is disordered.

This sequence belongs to the CTP synthase family. As to quaternary structure, homotetramer.

The enzyme catalyses UTP + L-glutamine + ATP + H2O = CTP + L-glutamate + ADP + phosphate + 2 H(+). It carries out the reaction L-glutamine + H2O = L-glutamate + NH4(+). The catalysed reaction is UTP + NH4(+) + ATP = CTP + ADP + phosphate + 2 H(+). It participates in pyrimidine metabolism; CTP biosynthesis via de novo pathway; CTP from UDP: step 2/2. Its activity is regulated as follows. Allosterically activated by GTP, when glutamine is the substrate; GTP has no effect on the reaction when ammonia is the substrate. The allosteric effector GTP functions by stabilizing the protein conformation that binds the tetrahedral intermediate(s) formed during glutamine hydrolysis. Inhibited by the product CTP, via allosteric rather than competitive inhibition. Functionally, catalyzes the ATP-dependent amination of UTP to CTP with either L-glutamine or ammonia as the source of nitrogen. Regulates intracellular CTP levels through interactions with the four ribonucleotide triphosphates. The polypeptide is CTP synthase (Rhodococcus opacus (strain B4)).